The following is a 454-amino-acid chain: Aspartokinase 3 (454 aa).

2 ACT domains span residues 312–388 and 389–454; these read ISKY…ALIM and VVGE…VLIS.

The protein belongs to the aspartokinase family. Monomer.

It catalyses the reaction L-aspartate + ATP = 4-phospho-L-aspartate + ADP. It participates in amino-acid biosynthesis; L-lysine biosynthesis via DAP pathway; (S)-tetrahydrodipicolinate from L-aspartate: step 1/4. It functions in the pathway amino-acid biosynthesis; L-methionine biosynthesis via de novo pathway; L-homoserine from L-aspartate: step 1/3. Its pathway is amino-acid biosynthesis; L-threonine biosynthesis; L-threonine from L-aspartate: step 1/5. Its function is as follows. Catalyzes the phosphorylation of the beta-carboxyl group of aspartic acid with ATP to yield 4-phospho-L-aspartate, which is involved in the branched biosynthetic pathway leading to the biosynthesis of amino acids threonine, isoleucine and methionine. This is Aspartokinase 3 (yclM) from Bacillus subtilis (strain 168).